A 387-amino-acid polypeptide reads, in one-letter code: Succinate--CoA ligase [ADP-forming] subunit beta (387 aa).

The region spanning 9 to 245 is the ATP-grasp domain; sequence KDLLESYGLK…KSQENAKELK (237 aa). Residues Lys46, 53–55, Glu100, Tyr103, and Glu108 contribute to the ATP site; that span reads GRG. Residues Asn200 and Asp214 each coordinate Mg(2+). Residues Asn265 and 322-324 each bind substrate; that span reads GIV.

The protein belongs to the succinate/malate CoA ligase beta subunit family. As to quaternary structure, heterotetramer of two alpha and two beta subunits. Requires Mg(2+) as cofactor.

It carries out the reaction succinate + ATP + CoA = succinyl-CoA + ADP + phosphate. The catalysed reaction is GTP + succinate + CoA = succinyl-CoA + GDP + phosphate. The protein operates within carbohydrate metabolism; tricarboxylic acid cycle; succinate from succinyl-CoA (ligase route): step 1/1. In terms of biological role, succinyl-CoA synthetase functions in the citric acid cycle (TCA), coupling the hydrolysis of succinyl-CoA to the synthesis of either ATP or GTP and thus represents the only step of substrate-level phosphorylation in the TCA. The beta subunit provides nucleotide specificity of the enzyme and binds the substrate succinate, while the binding sites for coenzyme A and phosphate are found in the alpha subunit. The polypeptide is Succinate--CoA ligase [ADP-forming] subunit beta (Francisella tularensis subsp. holarctica (strain OSU18)).